Here is a 932-residue protein sequence, read N- to C-terminus: Protocadherin gamma-A7 (932 aa).

An N-terminal signal peptide occupies residues 1 to 28 (MAAQPRGGDYRGFFLLSILLGTPWEAWA). Cadherin domains lie at 29-133 (GRIL…VPRF), 134-242 (LTEE…TPVF), 243-347 (SLPQ…APEV), 348-452 (TMTS…PPTF), 453-562 (PHSS…PPEI), and 570-682 (DGST…EPSD). Topologically, residues 29–692 (GRILYSVSEE…GPYNYDLTLY (664 aa)) are extracellular. 2 N-linked (GlcNAc...) asparagine glycosylation sites follow: Asn419 and Asn545. A helical transmembrane segment spans residues 693–713 (LVVAVATVSCVFLAFVLVLLA). At 714 to 932 (LRLRRWHKSR…KKKSGKKEKK (219 aa)) the chain is on the cytoplasmic side. Disordered stretches follow at residues 805–841 (PSIQ…WPNN) and 902–932 (ATLT…KEKK). Positions 922–932 (NKKKSGKKEKK) are enriched in basic residues.

The protein resides in the cell membrane. Potential calcium-dependent cell-adhesion protein. May be involved in the establishment and maintenance of specific neuronal connections in the brain. The polypeptide is Protocadherin gamma-A7 (PCDHGA7) (Homo sapiens (Human)).